Reading from the N-terminus, the 262-residue chain is F-actin-capping protein subunit alpha (262 aa).

The protein belongs to the F-actin-capping protein alpha subunit family. In terms of assembly, heterodimer of an alpha and a beta subunit.

In terms of biological role, F-actin-capping proteins bind in a Ca(2+)-independent manner to the fast growing ends of actin filaments (barbed end) thereby blocking the exchange of subunits at these ends. Unlike other capping proteins (such as gelsolin and severin), these proteins do not sever actin filaments. The protein is F-actin-capping protein subunit alpha (CAP1) of Kluyveromyces lactis (strain ATCC 8585 / CBS 2359 / DSM 70799 / NBRC 1267 / NRRL Y-1140 / WM37) (Yeast).